The following is a 487-amino-acid chain: UDP-glucosyl transferase 73CC6 (487 aa).

His-17 serves as the catalytic Proton acceptor. The Charge relay role is filled by Asp-114. 8 residues coordinate UDP: Ser-282, Trp-346, Ala-347, His-364, Asn-368, Ser-369, Glu-372, and Tyr-386.

This sequence belongs to the UDP-glycosyltransferase family. In terms of tissue distribution, mainly expressed in flowers and flower buds and, to a lesser extent, in leaves, stems and roots.

The protein operates within secondary metabolite biosynthesis; terpenoid biosynthesis. In terms of biological role, component of the oleanane-type triterpene saponins (e.g. saponarioside A and saponarioside B) biosynthetic pathway, leading to the production of natural products with detergent properties used as traditional sources of soap. A glycosyltransferase that mediates the conversion of QA-di to QA-tri via the elongation of the C-3 sugar chain with a D-xylose. The chain is UDP-glucosyl transferase 73CC6 from Saponaria officinalis (Common soapwort).